The sequence spans 154 residues: uncharacterized protein (154 aa).

The next 2 helical transmembrane spans lie at 54-74 and 81-101; these read FLIT…IYLL and FAFV…FFLS.

It localises to the cell membrane. This is an uncharacterized protein from Mycoplasma genitalium (strain ATCC 33530 / DSM 19775 / NCTC 10195 / G37) (Mycoplasmoides genitalium).